The primary structure comprises 168 residues: Photosystem I assembly protein Ycf3 (168 aa).

TPR repeat units lie at residues 35–68 (AFTY…EIDP), 72–105 (SYIL…NPFL), and 120–153 (GEQA…TPGN).

It belongs to the Ycf3 family.

The protein resides in the plastid. The protein localises to the chloroplast thylakoid membrane. In terms of biological role, essential for the assembly of the photosystem I (PSI) complex. May act as a chaperone-like factor to guide the assembly of the PSI subunits. This Drimys granadensis protein is Photosystem I assembly protein Ycf3.